Here is a 429-residue protein sequence, read N- to C-terminus: Glutamate-1-semialdehyde 2,1-aminomutase (429 aa).

Lys267 carries the post-translational modification N6-(pyridoxal phosphate)lysine.

It belongs to the class-III pyridoxal-phosphate-dependent aminotransferase family. HemL subfamily. As to quaternary structure, homodimer. Requires pyridoxal 5'-phosphate as cofactor.

The protein localises to the cytoplasm. It carries out the reaction (S)-4-amino-5-oxopentanoate = 5-aminolevulinate. Its pathway is porphyrin-containing compound metabolism; protoporphyrin-IX biosynthesis; 5-aminolevulinate from L-glutamyl-tRNA(Glu): step 2/2. The polypeptide is Glutamate-1-semialdehyde 2,1-aminomutase (Xanthomonas axonopodis pv. citri (strain 306)).